The following is a 490-amino-acid chain: Cardiolipin synthase 1 (490 aa).

2 consecutive transmembrane segments (helical) span residues 9–29 and 42–62; these read ILTILLVVGFITNVVLAFVII and WAWLFVLFVLPVIGFILYLFL. PLD phosphodiesterase domains follow at residues 225-252 and 403-430; these read MNNRNHRKIIIIDGQIGYVGGFNVGDDY and QNGFIHSKILMIDDEISSIGSANMDFRS. Catalysis depends on residues His-230, Lys-232, Asp-237, His-408, Lys-410, and Asp-415.

This sequence belongs to the phospholipase D family. Cardiolipin synthase subfamily.

It is found in the cell membrane. The catalysed reaction is 2 a 1,2-diacyl-sn-glycero-3-phospho-(1'-sn-glycerol) = a cardiolipin + glycerol. Its function is as follows. Catalyzes the reversible phosphatidyl group transfer from one phosphatidylglycerol molecule to another to form cardiolipin (CL) (diphosphatidylglycerol) and glycerol. The chain is Cardiolipin synthase 1 (cls1) from Staphylococcus epidermidis (strain ATCC 12228 / FDA PCI 1200).